Consider the following 152-residue polypeptide: Protein Smg homolog (152 aa).

The protein belongs to the Smg family.

This chain is Protein Smg homolog, found in Nitrosomonas europaea (strain ATCC 19718 / CIP 103999 / KCTC 2705 / NBRC 14298).